The primary structure comprises 638 residues: Mediator of RNA polymerase II transcription subunit 17 (638 aa).

Positions methionine 1–proline 21 are disordered.

Belongs to the Mediator complex subunit 17 family. Component of the Mediator complex.

The protein resides in the nucleus. Its function is as follows. Component of the Mediator complex, a coactivator involved in the regulated transcription of nearly all RNA polymerase II-dependent genes. Mediator functions as a bridge to convey information from gene-specific regulatory proteins to the basal RNA polymerase II transcription machinery. Mediator is recruited to promoters by direct interactions with regulatory proteins and serves as a scaffold for the assembly of a functional preinitiation complex with RNA polymerase II and the general transcription factors. The protein is Mediator of RNA polymerase II transcription subunit 17 (srb4) of Aspergillus oryzae (strain ATCC 42149 / RIB 40) (Yellow koji mold).